We begin with the raw amino-acid sequence, 235 residues long: Putative 4'-phosphopantetheinyl transferase HI_0152 (235 aa).

Mg(2+)-binding residues include Asp-112, Glu-114, and Glu-155.

Belongs to the P-Pant transferase superfamily. Gsp/Sfp/HetI/AcpT family. Mg(2+) is required as a cofactor.

Functionally, may transfer the 4'-phosphopantetheine moiety from coenzyme A (CoA) to a serine residue of a carrier protein domain. This chain is Putative 4'-phosphopantetheinyl transferase HI_0152, found in Haemophilus influenzae (strain ATCC 51907 / DSM 11121 / KW20 / Rd).